The sequence spans 237 residues: Neural retina-specific leucine zipper protein (237 aa).

Residues K20 and K24 each participate in a glycyl lysine isopeptide (Lys-Gly) (interchain with G-Cter in SUMO) cross-link. The segment at 26–64 (EPSEGRSGVPTASLGSTPYSSVPPSPTFSEPGMVGGGEA) is disordered. The interval 30-93 (GRSGVPTASL…SDEVLGLSPD (64 aa)) is minimal transactivation domain (MTD). Residues 159 to 185 (RLKQRRRTLKNRGYAQACRSKRLQQRR) form a basic motif region. Positions 159 to 222 (RLKQRRRTLK…DLYKARCDRL (64 aa)) constitute a bZIP domain. Residues 187–208 (LEAERARLAAQLDALRAEVARL) form a leucine-zipper region.

This sequence belongs to the bZIP family. As to quaternary structure, interacts with FIZ1; this interaction represses transactivation. Interacts (via the leucine-zipper domain) with CRX. Disumoylated at Lys-20. Sumoylation modulates the transcriptional activity of NRL on RHO and NR2E3 promoters, and is required for normal rod differentiation. Post-translationally, phosphorylated. As to expression, expressed in the retina (at protein level).

Its subcellular location is the cytoplasm. The protein localises to the nucleus. Its function is as follows. Acts as a transcriptional activator which regulates the expression of several rod-specific genes, including RHO and PDE6B. Also functions as a transcriptional coactivator, stimulating transcription mediated by the transcription factor CRX and NR2E3. Binds to the rhodopsin promoter in a sequence-specific manner. The polypeptide is Neural retina-specific leucine zipper protein (Nrl) (Mus musculus (Mouse)).